The chain runs to 127 residues: MSTFYVTAVPKSHSSLPKCQAMMSRTLLTGMAMYLDSSHAGAASMQVSWPPLLTSLGSKEMKSRWNWGSITCIMCFTCVGSQLSMSSSKASNFSGPLQLYQRGIGHITNPYRRPPAPAWPCSSSGTT.

Over 1-69 the chain is Extracellular; the sequence is MSTFYVTAVP…EMKSRWNWGS (69 aa). A helical transmembrane segment spans residues 70–88; sequence ITCIMCFTCVGSQLSMSSS. Residues 89 to 127 are Cytoplasmic-facing; sequence KASNFSGPLQLYQRGIGHITNPYRRPPAPAWPCSSSGTT.

As to expression, prominently expressed in brain and heart tissues. Weakly expressed in aorta, adrenal gland, and lung tissues.

Its subcellular location is the cell membrane. In the Dahl salt-resistant strain, acts as a dual receptor for both endothelin-1 and the signal sequence of vascular endothelial growth factor A and does not act as a receptor for angiotensin-2. Does not bind the VEGFA mature protein. In the Dahl salt-sensitive strain, acts as a dual endothelin-1/angiotensin-2 receptor that is functionally coupled to a calcium-mobilizing transduction system, responding equivalently to both endothelin-1/EDN1 and angiotensin-2 peptides in a highly specific manner. May play a role in angiogenesis with a significant role in cardiovascular and neural development. This chain is Dual endothelin-1/VEGF signal peptide receptor, found in Rattus norvegicus (Rat).